A 198-amino-acid polypeptide reads, in one-letter code: ATP-dependent Clp protease proteolytic subunit (198 aa).

Ser101 functions as the Nucleophile in the catalytic mechanism. His126 is a catalytic residue.

Belongs to the peptidase S14 family. As to quaternary structure, component of the chloroplastic Clp protease core complex.

Its subcellular location is the plastid. It localises to the chloroplast stroma. The catalysed reaction is Hydrolysis of proteins to small peptides in the presence of ATP and magnesium. alpha-casein is the usual test substrate. In the absence of ATP, only oligopeptides shorter than five residues are hydrolyzed (such as succinyl-Leu-Tyr-|-NHMec, and Leu-Tyr-Leu-|-Tyr-Trp, in which cleavage of the -Tyr-|-Leu- and -Tyr-|-Trp bonds also occurs).. Cleaves peptides in various proteins in a process that requires ATP hydrolysis. Has a chymotrypsin-like activity. Plays a major role in the degradation of misfolded proteins. This is ATP-dependent Clp protease proteolytic subunit from Solanum bulbocastanum (Wild potato).